We begin with the raw amino-acid sequence, 456 residues long: tRNA-2-methylthio-N(6)-dimethylallyladenosine synthase (456 aa).

The MTTase N-terminal domain occupies 18–134 (KKLFIETYGC…LPDLVASVEA (117 aa)). Residues Cys27, Cys63, Cys98, Cys172, Cys176, and Cys179 each contribute to the [4Fe-4S] cluster site. The Radical SAM core domain occupies 158–390 (CGNHISGFVS…IELQNRLSAE (233 aa)). The TRAM domain occupies 393–456 (ARDVGKTFEV…SATLKGEEVF (64 aa)).

It belongs to the methylthiotransferase family. MiaB subfamily. As to quaternary structure, monomer. [4Fe-4S] cluster is required as a cofactor.

It localises to the cytoplasm. It carries out the reaction N(6)-dimethylallyladenosine(37) in tRNA + (sulfur carrier)-SH + AH2 + 2 S-adenosyl-L-methionine = 2-methylsulfanyl-N(6)-dimethylallyladenosine(37) in tRNA + (sulfur carrier)-H + 5'-deoxyadenosine + L-methionine + A + S-adenosyl-L-homocysteine + 2 H(+). Functionally, catalyzes the methylthiolation of N6-(dimethylallyl)adenosine (i(6)A), leading to the formation of 2-methylthio-N6-(dimethylallyl)adenosine (ms(2)i(6)A) at position 37 in tRNAs that read codons beginning with uridine. The polypeptide is tRNA-2-methylthio-N(6)-dimethylallyladenosine synthase (Phocaeicola vulgatus (strain ATCC 8482 / DSM 1447 / JCM 5826 / CCUG 4940 / NBRC 14291 / NCTC 11154) (Bacteroides vulgatus)).